Here is a 162-residue protein sequence, read N- to C-terminus: UPF0303 protein Arad_3071 (162 aa).

Belongs to the UPF0303 family.

This is UPF0303 protein Arad_3071 from Rhizobium rhizogenes (strain K84 / ATCC BAA-868) (Agrobacterium radiobacter).